Consider the following 300-residue polypeptide: 33 kDa chaperonin (300 aa).

Cystine bridges form between C235–C237 and C269–C272.

This sequence belongs to the HSP33 family. In terms of processing, under oxidizing conditions two disulfide bonds are formed involving the reactive cysteines. Under reducing conditions zinc is bound to the reactive cysteines and the protein is inactive.

It localises to the cytoplasm. In terms of biological role, redox regulated molecular chaperone. Protects both thermally unfolding and oxidatively damaged proteins from irreversible aggregation. Plays an important role in the bacterial defense system toward oxidative stress. The protein is 33 kDa chaperonin of Pseudomonas syringae pv. tomato (strain ATCC BAA-871 / DC3000).